A 369-amino-acid chain; its full sequence is Glutamate 5-kinase (369 aa).

Lys-14 lines the ATP pocket. Residues Ser-56, Asp-143, and Asn-155 each contribute to the substrate site. Residues 175-176 (SD) and 215-221 (TGGMASK) each bind ATP. In terms of domain architecture, PUA spans 277–351 (AGKIRLDDGA…GMQTQDLPDG (75 aa)).

The protein belongs to the glutamate 5-kinase family.

Its subcellular location is the cytoplasm. It catalyses the reaction L-glutamate + ATP = L-glutamyl 5-phosphate + ADP. The protein operates within amino-acid biosynthesis; L-proline biosynthesis; L-glutamate 5-semialdehyde from L-glutamate: step 1/2. Catalyzes the transfer of a phosphate group to glutamate to form L-glutamate 5-phosphate. In Corynebacterium glutamicum (strain ATCC 13032 / DSM 20300 / JCM 1318 / BCRC 11384 / CCUG 27702 / LMG 3730 / NBRC 12168 / NCIMB 10025 / NRRL B-2784 / 534), this protein is Glutamate 5-kinase.